A 248-amino-acid polypeptide reads, in one-letter code: Opiorphin prepropeptide (248 aa).

A signal peptide spans 1 to 21; the sequence is MKLTFFLGLLALISCFTPSES. Pyrrolidone carboxylic acid is present on Q22. Residues 150–198 are disordered; the sequence is DTTITTNPPTTATATTSTSTKPTMTISSSTVPISSTPEPATSISAATPA. The N-linked (GlcNAc...) asparagine glycan is linked to N218.

This sequence belongs to the PROL1/PROL3 family. As to expression, abundantly expressed in lacrimal gland where it found in the secretory endpieces. Also expressed at modest levels in the submandibular gland.

It is found in the secreted. In terms of biological role, opiorphin is an endogenous inhibitor of neprilysin and aminopeptidase N. Inhibits the breakdown of substance P, Mca-BK2 and Met-enkephalin by neprilysin in vitro with IC(50) values of 29 uM, 33 uM and 33 uM respectively. Inhibits the breakdown of Ala-pNA by aminopeptidase N in vitro with an IC(50) of 65 uM. Has a potent analgesic effect when administered to rats by intravenous injection. The chain is Opiorphin prepropeptide from Homo sapiens (Human).